Here is a 212-residue protein sequence, read N- to C-terminus: Uracil phosphoribosyltransferase (212 aa).

5-phospho-alpha-D-ribose 1-diphosphate is bound by residues R78, R103, and 130–138; that span reads DPMLATGSS. Uracil contacts are provided by residues I193 and 198-200; that span reads GDA. D199 contacts 5-phospho-alpha-D-ribose 1-diphosphate.

It belongs to the UPRTase family. Requires Mg(2+) as cofactor.

The catalysed reaction is UMP + diphosphate = 5-phospho-alpha-D-ribose 1-diphosphate + uracil. It participates in pyrimidine metabolism; UMP biosynthesis via salvage pathway; UMP from uracil: step 1/1. Allosterically activated by GTP. Its function is as follows. Catalyzes the conversion of uracil and 5-phospho-alpha-D-ribose 1-diphosphate (PRPP) to UMP and diphosphate. The polypeptide is Uracil phosphoribosyltransferase (Pseudomonas syringae pv. tomato (strain ATCC BAA-871 / DC3000)).